Reading from the N-terminus, the 104-residue chain is Large ribosomal subunit protein uL24 (104 aa).

This sequence belongs to the universal ribosomal protein uL24 family. Part of the 50S ribosomal subunit.

One of two assembly initiator proteins, it binds directly to the 5'-end of the 23S rRNA, where it nucleates assembly of the 50S subunit. Its function is as follows. One of the proteins that surrounds the polypeptide exit tunnel on the outside of the subunit. This Escherichia coli O81 (strain ED1a) protein is Large ribosomal subunit protein uL24.